The following is a 181-amino-acid chain: MTITRGDFKLRLNQGEFTDSQIIVMLGENGTGKTTFIKMLAGSKLDIDEEGSQVHEIPQFSVSYKNQHMSNRKFEITVRDLIHRKIPNAYAEHQFVSDVMKPLKIEELMDKSFNKLSGGEKQRVALALCLGKSADIYLIDEPSAFLDSEQRIIASKVIKRFILQMKKAAFARFHNGYVFGR.

In terms of domain architecture, ABC transporter spans 20 to 176; that stretch reads SQIIVMLGEN…KAAFARFHNG (157 aa). Residue 27-34 coordinates ATP; sequence GENGTGKT.

The protein belongs to the ABC transporter superfamily. ABCE family. As to expression, mostly expressed in roots and leaves, and, to a lower extent, in stems, flowers and siliques.

The protein is ABC transporter E family member 3 (ABCE3) of Arabidopsis thaliana (Mouse-ear cress).